We begin with the raw amino-acid sequence, 406 residues long: UPF0754 membrane protein Cyan7425_4067 (406 aa).

The chain crosses the membrane as a helical span at residues isoleucine 381–leucine 401.

The protein belongs to the UPF0754 family.

It is found in the cell inner membrane. The protein is UPF0754 membrane protein Cyan7425_4067 of Cyanothece sp. (strain PCC 7425 / ATCC 29141).